The sequence spans 117 residues: Protein RALF-like 27 (117 aa).

The first 27 residues, 1–27 (MTKTFFSFSFFFTSSLLLLLAATSATA), serve as a signal peptide directing secretion. A propeptide spans 28 to 71 (STGNVTSGLRYDGCAPGDTVGECITATVEEEDEEGVEAVVRRIL) (removed in mature form). Residue Asn-31 is glycosylated (N-linked (GlcNAc...) asparagine). Cystine bridges form between Cys-88-Cys-96 and Cys-107-Cys-113.

This sequence belongs to the plant rapid alkalinization factor (RALF) family.

The protein localises to the secreted. In terms of biological role, cell signaling peptide that may regulate plant stress, growth, and development. Mediates a rapid alkalinization of extracellular space by mediating a transient increase in the cytoplasmic Ca(2+) concentration leading to a calcium-dependent signaling events through a cell surface receptor and a concomitant activation of some intracellular mitogen-activated protein kinases. The protein is Protein RALF-like 27 (RALFL27) of Arabidopsis thaliana (Mouse-ear cress).